Here is a 156-residue protein sequence, read N- to C-terminus: 6,7-dimethyl-8-ribityllumazine synthase (156 aa).

Residues phenylalanine 28, 62-64 (ALE), and 86-88 (AVI) each bind 5-amino-6-(D-ribitylamino)uracil. 91–92 (ET) lines the (2S)-2-hydroxy-3-oxobutyl phosphate pocket. The active-site Proton donor is the histidine 94. Asparagine 119 serves as a coordination point for 5-amino-6-(D-ribitylamino)uracil. Residue arginine 133 participates in (2S)-2-hydroxy-3-oxobutyl phosphate binding.

The protein belongs to the DMRL synthase family.

The catalysed reaction is (2S)-2-hydroxy-3-oxobutyl phosphate + 5-amino-6-(D-ribitylamino)uracil = 6,7-dimethyl-8-(1-D-ribityl)lumazine + phosphate + 2 H2O + H(+). It functions in the pathway cofactor biosynthesis; riboflavin biosynthesis; riboflavin from 2-hydroxy-3-oxobutyl phosphate and 5-amino-6-(D-ribitylamino)uracil: step 1/2. Catalyzes the formation of 6,7-dimethyl-8-ribityllumazine by condensation of 5-amino-6-(D-ribitylamino)uracil with 3,4-dihydroxy-2-butanone 4-phosphate. This is the penultimate step in the biosynthesis of riboflavin. The sequence is that of 6,7-dimethyl-8-ribityllumazine synthase from Azoarcus sp. (strain BH72).